Here is a 377-residue protein sequence, read N- to C-terminus: Erythronate-4-phosphate dehydrogenase (377 aa).

Residues Ser-45 and Thr-67 each coordinate substrate. NAD(+) contacts are provided by residues Asp-147, 210–212, and Asp-236; that span reads ASR. Arg-212 is a catalytic residue. The active site involves Glu-241. The Proton donor role is filled by His-258. Gly-261 contacts NAD(+). Tyr-262 contributes to the substrate binding site.

This sequence belongs to the D-isomer specific 2-hydroxyacid dehydrogenase family. PdxB subfamily. As to quaternary structure, homodimer.

Its subcellular location is the cytoplasm. It carries out the reaction 4-phospho-D-erythronate + NAD(+) = (R)-3-hydroxy-2-oxo-4-phosphooxybutanoate + NADH + H(+). The protein operates within cofactor biosynthesis; pyridoxine 5'-phosphate biosynthesis; pyridoxine 5'-phosphate from D-erythrose 4-phosphate: step 2/5. Its function is as follows. Catalyzes the oxidation of erythronate-4-phosphate to 3-hydroxy-2-oxo-4-phosphonooxybutanoate. The protein is Erythronate-4-phosphate dehydrogenase of Aeromonas salmonicida (strain A449).